A 43-amino-acid chain; its full sequence is Protein PsbN (43 aa).

The helical transmembrane segment at 5-27 (TLVTIFISGSLVSFTGYALYTAF) threads the bilayer.

Belongs to the PsbN family.

It is found in the plastid. The protein localises to the chloroplast thylakoid membrane. May play a role in photosystem I and II biogenesis. This chain is Protein PsbN, found in Piper cenocladum (Ant piper).